A 617-amino-acid chain; its full sequence is ATP-dependent rRNA helicase SPB4 (617 aa).

The Q motif signature appears at 7–35 (WADLDYELQPWIKKAINVSGFDSMTPVQA). Positions 38 to 224 (IPMFAKNKDV…KTGLRNPVKI (187 aa)) constitute a Helicase ATP-binding domain. 51-58 (SVTGSGKT) contributes to the ATP binding site. The DEAD box motif lies at 172 to 175 (DEAD). The Helicase C-terminal domain occupies 252–406 (NLIHIMNNIR…ETDINKNKIS (155 aa)).

Belongs to the DEAD box helicase family. DDX55/SPB4 subfamily. As to quaternary structure, component of pre-60S ribosomal complexes.

Its subcellular location is the nucleus. It is found in the nucleolus. The enzyme catalyses ATP + H2O = ADP + phosphate + H(+). In terms of biological role, ATP-binding RNA helicase involved in the biogenesis of 60S ribosomal subunits. Binds 90S pre-ribosomal particles and dissociates from pre-60S ribosomal particles after processing of 27SB pre-rRNA. Required for the normal formation of 18S rRNA through the processing of pre-rRNAs at sites A0, A1 and A2, and the normal formation of 25S and 5.8S rRNAs through the processing of pre-rRNAs at sites C1 and C2. This is ATP-dependent rRNA helicase SPB4 from Candida glabrata (strain ATCC 2001 / BCRC 20586 / JCM 3761 / NBRC 0622 / NRRL Y-65 / CBS 138) (Yeast).